Consider the following 446-residue polypeptide: Glycerol-3-phosphate acyltransferase 3 (446 aa).

The next 3 membrane-spanning stretches (helical) occupy residues 11–31 (IFIIWLTLVIVLILLPSMFGS), 146–166 (LRVTLIWVLGLCVRYCILLPL), and 168–188 (ITLATIGISWLVLGATLVGQL). Positions 236–241 (HTSPID) match the HXXXXD motif motif.

This sequence belongs to the 1-acyl-sn-glycerol-3-phosphate acyltransferase family.

The protein localises to the endoplasmic reticulum membrane. It catalyses the reaction sn-glycerol 3-phosphate + an acyl-CoA = a 1-acyl-sn-glycero-3-phosphate + CoA. The catalysed reaction is a 1-acyl-sn-glycero-3-phosphate + an acyl-CoA = a 1,2-diacyl-sn-glycero-3-phosphate + CoA. The enzyme catalyses dodecanoyl-CoA + sn-glycerol 3-phosphate = 1-dodecanoyl-sn-glycerol 3-phosphate + CoA. It carries out the reaction sn-glycerol 3-phosphate + hexadecanoyl-CoA = 1-hexadecanoyl-sn-glycero-3-phosphate + CoA. It catalyses the reaction sn-glycerol 3-phosphate + (9Z)-octadecenoyl-CoA = 1-(9Z-octadecenoyl)-sn-glycero-3-phosphate + CoA. The catalysed reaction is (9Z,12Z)-octadecadienoyl-CoA + sn-glycerol 3-phosphate = 1-(9Z,12Z)-octadecadienoyl-sn-glycero-3-phosphate + CoA. The enzyme catalyses 1-tetradecanoyl-sn-glycerol 3-phosphate + (9Z)-octadecenoyl-CoA = 1-tetradecanoyl-2-(9Z)-octadecenoyl-sn-glycero-3-phosphate + CoA. It carries out the reaction 1-hexadecanoyl-sn-glycero-3-phosphate + (9Z)-octadecenoyl-CoA = 1-hexadecanoyl-2-(9Z-octadecenoyl)-sn-glycero-3-phosphate + CoA. It catalyses the reaction 1-(9Z-octadecenoyl)-sn-glycero-3-phosphate + (9Z)-octadecenoyl-CoA = 1,2-di-(9Z-octadecenoyl)-sn-glycero-3-phosphate + CoA. The catalysed reaction is 1-(6Z,9Z,12Z-octadecatrienoyl)-sn-glycero-3-phosphate + (9Z)-octadecenoyl-CoA = (6Z,9Z,12Z)-octadecatrienoyl-2-(9Z)-octadecenoyl-sn-glycero-3-phosphate + CoA. The enzyme catalyses 1-(9Z,12Z,15Z)-octadecatrienoyl-sn-glycero-3-phosphate + (9Z)-octadecenoyl-CoA = 1-(9Z,12Z,15Z)-octadecatrienoyl-2-(9Z)-octadecenoyl-sn-glycero-3-phosphate + CoA. It carries out the reaction 1-(9Z-octadecenoyl)-sn-glycero-3-phosphate + tetradecanoyl-CoA = 1-(9Z)-octadecenoyl-2-tetradecanoyl-sn-glycero-3-phosphate + CoA. It catalyses the reaction 1-(9Z-octadecenoyl)-sn-glycero-3-phosphate + hexadecanoyl-CoA = 1-(9Z)-octadecenoyl-2-hexadecanoyl-sn-glycero-3-phosphate + CoA. The catalysed reaction is 1-(9Z-octadecenoyl)-sn-glycero-3-phosphate + octadecanoyl-CoA = 1-(9Z-octadecenoyl)-2-octadecanoyl-sn-glycero-3-phosphate + CoA. The enzyme catalyses 1-(9Z-octadecenoyl)-sn-glycero-3-phosphate + (9Z,12Z)-octadecadienoyl-CoA = 1-(9Z)-octadecenoyl-2-(9Z,12Z)-octadecadienoyl-sn-glycero-3-phosphate + CoA. It carries out the reaction 1-(5Z,8Z,11Z,14Z-eicosatetraenoyl)-sn-glycero-3-phosphate + (9Z)-octadecenoyl-CoA = 1-(5Z,8Z,11Z,14Z)-eicosatetraenoyl-2-(9Z)-octadecenoyl-sn-glycero-3-phosphate + CoA. The protein operates within glycerolipid metabolism; triacylglycerol biosynthesis. It participates in phospholipid metabolism; CDP-diacylglycerol biosynthesis; CDP-diacylglycerol from sn-glycerol 3-phosphate: step 1/3. Functionally, converts glycerol-3-phosphate to 1-acyl-sn-glycerol-3-phosphate (lysophosphatidic acid or LPA) by incorporating an acyl moiety at the sn-1 position of the glycerol backbone. Also converts LPA into 1,2-diacyl-sn-glycerol-3-phosphate (phosphatidic acid or PA) by incorporating an acyl moiety at the sn-2 position of the glycerol backbone. Protects cells against lipotoxicity. The polypeptide is Glycerol-3-phosphate acyltransferase 3 (Xenopus laevis (African clawed frog)).